The following is a 435-amino-acid chain: NADH-quinone oxidoreductase subunit D (435 aa).

It belongs to the complex I 49 kDa subunit family. NDH-1 is composed of 14 different subunits. Subunits NuoB, C, D, E, F, and G constitute the peripheral sector of the complex.

The protein localises to the cell membrane. It carries out the reaction a quinone + NADH + 5 H(+)(in) = a quinol + NAD(+) + 4 H(+)(out). Its function is as follows. NDH-1 shuttles electrons from NADH, via FMN and iron-sulfur (Fe-S) centers, to quinones in the respiratory chain. The immediate electron acceptor for the enzyme in this species is believed to be ubiquinone. Couples the redox reaction to proton translocation (for every two electrons transferred, four hydrogen ions are translocated across the cytoplasmic membrane), and thus conserves the redox energy in a proton gradient. In Stenotrophomonas maltophilia (strain K279a), this protein is NADH-quinone oxidoreductase subunit D.